Here is a 61-residue protein sequence, read N- to C-terminus: Large ribosomal subunit protein uL30 (61 aa).

This sequence belongs to the universal ribosomal protein uL30 family. In terms of assembly, part of the 50S ribosomal subunit.

The polypeptide is Large ribosomal subunit protein uL30 (Petrotoga mobilis (strain DSM 10674 / SJ95)).